The primary structure comprises 570 residues: Phosphoenolpyruvate-protein phosphotransferase (570 aa).

Catalysis depends on His189, which acts as the Tele-phosphohistidine intermediate. The phosphoenolpyruvate site is built by Arg296 and Arg332. Mg(2+) is bound by residues Glu431 and Asp455. Phosphoenolpyruvate-binding positions include 454-455 (ND) and Arg465. The Proton donor role is filled by Cys502.

Belongs to the PEP-utilizing enzyme family. Homodimer. Interacts with FloT. Mg(2+) serves as cofactor.

Its subcellular location is the cytoplasm. It is found in the membrane raft. The enzyme catalyses L-histidyl-[protein] + phosphoenolpyruvate = N(pros)-phospho-L-histidyl-[protein] + pyruvate. Functionally, general (non sugar-specific) component of the phosphoenolpyruvate-dependent sugar phosphotransferase system (sugar PTS). This major carbohydrate active-transport system catalyzes the phosphorylation of incoming sugar substrates concomitantly with their translocation across the cell membrane. Enzyme I transfers the phosphoryl group from phosphoenolpyruvate (PEP) to the phosphoryl carrier protein (HPr). In Bacillus subtilis (strain 168), this protein is Phosphoenolpyruvate-protein phosphotransferase (ptsI).